The following is a 100-amino-acid chain: Sec-independent protein translocase protein TatA (100 aa).

Residues 1-21 (MGALRPWHIAVLVVVLILLFG) traverse the membrane as a helical segment. The span at 46-58 (LHDDDRDLAEKAD) shows a compositional bias: basic and acidic residues. The interval 46 to 100 (LHDDDRDLAEKADAQAGYQPMPPQVQQGQHPQQSPYPAPPQQQPVVDPVQRTRDS) is disordered. A compositionally biased stretch (low complexity) spans 69 to 78 (QVQQGQHPQQ).

The protein belongs to the TatA/E family. As to quaternary structure, the Tat system comprises two distinct complexes: a TatABC complex, containing multiple copies of TatA, TatB and TatC subunits, and a separate TatA complex, containing only TatA subunits. Substrates initially bind to the TatABC complex, which probably triggers association of the separate TatA complex to form the active translocon.

It is found in the cell membrane. Part of the twin-arginine translocation (Tat) system that transports large folded proteins containing a characteristic twin-arginine motif in their signal peptide across membranes. TatA could form the protein-conducting channel of the Tat system. The polypeptide is Sec-independent protein translocase protein TatA (Salinispora tropica (strain ATCC BAA-916 / DSM 44818 / JCM 13857 / NBRC 105044 / CNB-440)).